We begin with the raw amino-acid sequence, 218 residues long: Cytochrome b6 (218 aa).

Residues 35-55 (IFYCLGGITLVCFLIQFATGF) traverse the membrane as a helical segment. Heme c is bound at residue cysteine 38. Heme b is bound by residues histidine 89 and histidine 103. 3 consecutive transmembrane segments (helical) span residues 93–113 (ASMM…TGGF), 119–139 (LTWV…VTGY), and 189–209 (LHTF…FLMI). 2 residues coordinate heme b: histidine 190 and histidine 205.

Belongs to the cytochrome b family. PetB subfamily. In terms of assembly, the 4 large subunits of the cytochrome b6-f complex are cytochrome b6, subunit IV (17 kDa polypeptide, PetD), cytochrome f and the Rieske protein, while the 4 small subunits are PetG, PetL, PetM and PetN. The complex functions as a dimer. Heme b is required as a cofactor. The cofactor is heme c.

Its subcellular location is the cellular thylakoid membrane. Its function is as follows. Component of the cytochrome b6-f complex, which mediates electron transfer between photosystem II (PSII) and photosystem I (PSI), cyclic electron flow around PSI, and state transitions. In Prochlorococcus marinus subsp. pastoris (strain CCMP1986 / NIES-2087 / MED4), this protein is Cytochrome b6.